A 423-amino-acid chain; its full sequence is Gamma-glutamyl phosphate reductase (423 aa).

Belongs to the gamma-glutamyl phosphate reductase family.

The protein localises to the cytoplasm. It catalyses the reaction L-glutamate 5-semialdehyde + phosphate + NADP(+) = L-glutamyl 5-phosphate + NADPH + H(+). It functions in the pathway amino-acid biosynthesis; L-proline biosynthesis; L-glutamate 5-semialdehyde from L-glutamate: step 2/2. Catalyzes the NADPH-dependent reduction of L-glutamate 5-phosphate into L-glutamate 5-semialdehyde and phosphate. The product spontaneously undergoes cyclization to form 1-pyrroline-5-carboxylate. The sequence is that of Gamma-glutamyl phosphate reductase from Pseudomonas putida (strain ATCC 700007 / DSM 6899 / JCM 31910 / BCRC 17059 / LMG 24140 / F1).